We begin with the raw amino-acid sequence, 987 residues long: UvrABC system protein A (987 aa).

33–40 (GLSGSGKS) lines the ATP pocket. A C4-type zinc finger spans residues 255–282 (CPVCDYSLPELEPRLFSFNAPVGACPSC). ABC transporter domains follow at residues 312-589 (WDRR…PRSL) and 609-938 (PNPK…QFLA). 642–649 (GVSGSGKS) lines the ATP pocket. The C4-type zinc-finger motif lies at 741–767 (CEACQGDGMIKVEMHFLPDVYVPCDVC). The tract at residues 948 to 987 (ETRPAAMANKPDARPPRKVKPEKVAKAAKSATKKTAKKAS) is disordered. Positions 958 to 972 (PDARPPRKVKPEKVA) are enriched in basic and acidic residues. The segment covering 978–987 (ATKKTAKKAS) has biased composition (basic residues).

This sequence belongs to the ABC transporter superfamily. UvrA family. Forms a heterotetramer with UvrB during the search for lesions.

Its subcellular location is the cytoplasm. The UvrABC repair system catalyzes the recognition and processing of DNA lesions. UvrA is an ATPase and a DNA-binding protein. A damage recognition complex composed of 2 UvrA and 2 UvrB subunits scans DNA for abnormalities. When the presence of a lesion has been verified by UvrB, the UvrA molecules dissociate. The polypeptide is UvrABC system protein A (Xanthomonas axonopodis pv. citri (strain 306)).